Here is an 864-residue protein sequence, read N- to C-terminus: DNA mismatch repair protein MutS (864 aa).

Position 613–620 (613–620) interacts with ATP; the sequence is GPNMGGKS.

This sequence belongs to the DNA mismatch repair MutS family.

Its function is as follows. This protein is involved in the repair of mismatches in DNA. It is possible that it carries out the mismatch recognition step. This protein has a weak ATPase activity. In Actinobacillus pleuropneumoniae serotype 3 (strain JL03), this protein is DNA mismatch repair protein MutS.